The sequence spans 121 residues: Small ribosomal subunit protein uS13 (121 aa).

Positions 94–121 (DLPVRGQRTKTNARTRKGPRKSGVQLKK) are disordered. The span at 100–121 (QRTKTNARTRKGPRKSGVQLKK) shows a compositional bias: basic residues.

This sequence belongs to the universal ribosomal protein uS13 family. In terms of assembly, part of the 30S ribosomal subunit. Forms a loose heterodimer with protein S19. Forms two bridges to the 50S subunit in the 70S ribosome.

Located at the top of the head of the 30S subunit, it contacts several helices of the 16S rRNA. In the 70S ribosome it contacts the 23S rRNA (bridge B1a) and protein L5 of the 50S subunit (bridge B1b), connecting the 2 subunits; these bridges are implicated in subunit movement. Contacts the tRNAs in the A and P-sites. The polypeptide is Small ribosomal subunit protein uS13 (Polynucleobacter necessarius subsp. necessarius (strain STIR1)).